The chain runs to 544 residues: Ribosomal protein S6 kinase-like 1 (544 aa).

In terms of domain architecture, MIT spans 87–115; sequence VHVDPNKERREAVKLKITKYLRRAEEIFN. The Protein kinase domain maps to 145–534; it reads SALEQLKGCR…TSRLKSHPFF (390 aa). Residues 151 to 159 and Lys-177 contribute to the ATP site; that span reads KGCRVVGII. 2 disordered regions span residues 262-344 and 353-372; these read PAEL…HWVR and AYGRGRGRNPPSANRASLGS. Positions 303–313 are enriched in polar residues; that stretch reads SRPSAVFSSDP. Residue Asp-407 is the Proton acceptor of the active site.

It belongs to the protein kinase superfamily. Ser/Thr protein kinase family. S6 kinase subfamily.

It carries out the reaction L-seryl-[protein] + ATP = O-phospho-L-seryl-[protein] + ADP + H(+). The catalysed reaction is L-threonyl-[protein] + ATP = O-phospho-L-threonyl-[protein] + ADP + H(+). The protein is Ribosomal protein S6 kinase-like 1 (Rps6kl1) of Mus musculus (Mouse).